The sequence spans 445 residues: GTPase Obg (445 aa).

One can recognise an Obg domain in the interval 7 to 164 (PEFVDCVTVE…RKLRLEVKSI (158 aa)). The region spanning 165-342 (ADVALVGFPS…FTLRLGEICQ (178 aa)) is the OBG-type G domain. GTP contacts are provided by residues 171–178 (GFPSVGKS), 196–200 (FTTLH), 217–220 (DVPG), 291–294 (NKID), and 323–325 (SAV). S178 and T198 together coordinate Mg(2+). The region spanning 357 to 434 (IPAKNTPEFS…IGGVIFTWDP (78 aa)) is the OCT domain.

Belongs to the TRAFAC class OBG-HflX-like GTPase superfamily. OBG GTPase family. In terms of assembly, monomer. Mg(2+) is required as a cofactor.

Its subcellular location is the cytoplasm. In terms of biological role, an essential GTPase which binds GTP, GDP and possibly (p)ppGpp with moderate affinity, with high nucleotide exchange rates and a fairly low GTP hydrolysis rate. Plays a role in control of the cell cycle, stress response, ribosome biogenesis and in those bacteria that undergo differentiation, in morphogenesis control. The protein is GTPase Obg of Tropheryma whipplei (strain Twist) (Whipple's bacillus).